The following is a 258-amino-acid chain: Acetylglutamate kinase (258 aa).

Substrate contacts are provided by residues 41–42 (GG), Arg-63, and Asn-156.

Belongs to the acetylglutamate kinase family. ArgB subfamily.

The protein resides in the cytoplasm. It catalyses the reaction N-acetyl-L-glutamate + ATP = N-acetyl-L-glutamyl 5-phosphate + ADP. It functions in the pathway amino-acid biosynthesis; L-arginine biosynthesis; N(2)-acetyl-L-ornithine from L-glutamate: step 2/4. In terms of biological role, catalyzes the ATP-dependent phosphorylation of N-acetyl-L-glutamate. This is Acetylglutamate kinase from Bacillus amyloliquefaciens (Bacillus velezensis).